The following is a 610-amino-acid chain: Serine/threonine-protein kinase VRK1 (610 aa).

One can recognise a Protein kinase domain in the interval 32–384 (FIVGKQFATG…PRKRTTRKAV (353 aa)). ATP contacts are provided by residues 38 to 46 (FATGGFGRI) and Lys61. Asp167 (proton acceptor) is an active-site residue. Disordered regions lie at residues 317-476 (IQKT…NKVA), 498-530 (ISVA…VGEG), 544-577 (KKAK…KGRR), and 590-610 (ERLA…SSEV). Over residues 352-373 (AVKEESDNKDNDEVEVKPEKKA) the composition is skewed to basic and acidic residues. The segment covering 388–397 (NDSDDNEEQY) has biased composition (acidic residues). The segment covering 447–458 (TTPSSAASTSRS) has biased composition (low complexity). Positions 465–474 (LTSSTASSNK) are enriched in polar residues. Residues 502 to 517 (SDKSPTTSTPSSSSGL) are compositionally biased toward low complexity. Polar residues-rich tracts occupy residues 550–559 (SGISSATKAS) and 594–610 (SRQT…SSEV).

Belongs to the protein kinase superfamily. CK1 Ser/Thr protein kinase family. VRK subfamily. Post-translationally, autophosphorylates in vitro. In terms of tissue distribution, present in germ cells at all stages of progression from the mitotic zone to mature oocytes, but not in maturing spermatids (at the protein level). Expressed in the ventral nerve cord and vulva cells.

It localises to the nucleus. It is found in the cytoplasm. The protein localises to the cajal body. It carries out the reaction L-seryl-[protein] + ATP = O-phospho-L-seryl-[protein] + ADP + H(+). The enzyme catalyses L-threonyl-[protein] + ATP = O-phospho-L-threonyl-[protein] + ADP + H(+). In terms of biological role, serine/threonine kinase that phosphorylates baf-1, thus regulating the association of baf-1 with chromatin and nuclear membrane proteins during nuclear envelope formation. May act through the egl-17 signaling pathway. Essential in hermaphrodites for formation of the vulva, uterus, and uterine seam cells and for development and maintenance of the somatic gonad and thus the germ line. Acts to prevent cep-1 from triggering an inappropriate cell cycle arrest, thereby promoting germ cell proliferation. Regulates anchor cell polarity and the timing of anchor cell invasion through the basement membranes separating vulval and somatic gonadal cells during the L3 larval stage. The chain is Serine/threonine-protein kinase VRK1 from Caenorhabditis elegans.